Consider the following 123-residue polypeptide: Galanin peptides (123 aa).

A signal peptide spans 1 to 19; sequence MPRGSVLLLASLLLAAALS. Residues 20–30 constitute a propeptide that is removed on maturation; that stretch reads ATLGLGSPVKE. A compositionally biased stretch (basic and acidic residues) spans 53 to 66; that stretch reads SFQDKHGLAGKREL. The tract at residues 53–79 is disordered; the sequence is SFQDKHGLAGKRELEPEDEARPGSFDR. Residue alanine 61 is modified to Alanine amide. Serine 116 is subject to Phosphoserine.

The protein belongs to the galanin family.

Its subcellular location is the secreted. In terms of biological role, endocrine hormone of the central and peripheral nervous systems that binds and activates the G protein-coupled receptors GALR1, GALR2, and GALR3. This small neuropeptide may regulate diverse physiologic functions including contraction of smooth muscle of the gastrointestinal and genitourinary tract, growth hormone and insulin release and adrenal secretion. This is Galanin peptides (GAL) from Bos taurus (Bovine).